The following is a 352-amino-acid chain: F-box/kelch-repeat protein SKIP30 (352 aa).

Residues 9–55 form the F-box domain; it reads SGLLDGIPEAVALRCLAHVPLHLHPNLELVSRSWRAAIRSHELFRVR. Kelch repeat units follow at residues 57–109, 110–167, 168–215, 243–293, and 296–351; these read ELRS…TTAG, MLFV…VLQG, KIVV…LVVN, YGWP…MTSL, and EVLI…TQLT.

As to quaternary structure, part of a SCF (ASK-cullin-F-box) protein ligase complex. Interacts with SKP1A/ASK1.

It participates in protein modification; protein ubiquitination. Functionally, component of SCF(ASK-cullin-F-box) E3 ubiquitin ligase complexes, which may mediate the ubiquitination and subsequent proteasomal degradation of target proteins. The protein is F-box/kelch-repeat protein SKIP30 (SKIP30) of Arabidopsis thaliana (Mouse-ear cress).